Reading from the N-terminus, the 343-residue chain is Holliday junction branch migration complex subunit RuvB (343 aa).

The large ATPase domain (RuvB-L) stretch occupies residues 1-181 (MDRIVEIEKV…FGMQFRLQFY (181 aa)). Residues L20, R21, G62, K65, T66, T67, 128 to 130 (EDF), R171, Y181, and R218 contribute to the ATP site. Position 66 (T66) interacts with Mg(2+). The tract at residues 182–252 (TDNELARIIS…RAKSSLDSLG (71 aa)) is small ATPAse domain (RuvB-S). The tract at residues 255-343 (DLGFDEMDLK…EKQNKGLFNE (89 aa)) is head domain (RuvB-H). Positions 308 and 313 each coordinate DNA.

Belongs to the RuvB family. As to quaternary structure, homohexamer. Forms an RuvA(8)-RuvB(12)-Holliday junction (HJ) complex. HJ DNA is sandwiched between 2 RuvA tetramers; dsDNA enters through RuvA and exits via RuvB. An RuvB hexamer assembles on each DNA strand where it exits the tetramer. Each RuvB hexamer is contacted by two RuvA subunits (via domain III) on 2 adjacent RuvB subunits; this complex drives branch migration. In the full resolvosome a probable DNA-RuvA(4)-RuvB(12)-RuvC(2) complex forms which resolves the HJ.

The protein resides in the cytoplasm. The enzyme catalyses ATP + H2O = ADP + phosphate + H(+). In terms of biological role, the RuvA-RuvB-RuvC complex processes Holliday junction (HJ) DNA during genetic recombination and DNA repair, while the RuvA-RuvB complex plays an important role in the rescue of blocked DNA replication forks via replication fork reversal (RFR). RuvA specifically binds to HJ cruciform DNA, conferring on it an open structure. The RuvB hexamer acts as an ATP-dependent pump, pulling dsDNA into and through the RuvAB complex. RuvB forms 2 homohexamers on either side of HJ DNA bound by 1 or 2 RuvA tetramers; 4 subunits per hexamer contact DNA at a time. Coordinated motions by a converter formed by DNA-disengaged RuvB subunits stimulates ATP hydrolysis and nucleotide exchange. Immobilization of the converter enables RuvB to convert the ATP-contained energy into a lever motion, pulling 2 nucleotides of DNA out of the RuvA tetramer per ATP hydrolyzed, thus driving DNA branch migration. The RuvB motors rotate together with the DNA substrate, which together with the progressing nucleotide cycle form the mechanistic basis for DNA recombination by continuous HJ branch migration. Branch migration allows RuvC to scan DNA until it finds its consensus sequence, where it cleaves and resolves cruciform DNA. The polypeptide is Holliday junction branch migration complex subunit RuvB (Campylobacter fetus subsp. fetus (strain 82-40)).